The chain runs to 124 residues: Small ribosomal subunit protein uS12 (124 aa).

Residue Asp-89 is modified to 3-methylthioaspartic acid.

Belongs to the universal ribosomal protein uS12 family. As to quaternary structure, part of the 30S ribosomal subunit. Contacts proteins S8 and S17. May interact with IF1 in the 30S initiation complex.

With S4 and S5 plays an important role in translational accuracy. Its function is as follows. Interacts with and stabilizes bases of the 16S rRNA that are involved in tRNA selection in the A site and with the mRNA backbone. Located at the interface of the 30S and 50S subunits, it traverses the body of the 30S subunit contacting proteins on the other side and probably holding the rRNA structure together. The combined cluster of proteins S8, S12 and S17 appears to hold together the shoulder and platform of the 30S subunit. In Tolumonas auensis (strain DSM 9187 / NBRC 110442 / TA 4), this protein is Small ribosomal subunit protein uS12.